Consider the following 245-residue polypeptide: ATP synthase subunit a, chloroplastic (245 aa).

5 consecutive transmembrane segments (helical) span residues 34 to 54 (TLMT…LSNL), 93 to 113 (VPFL…GALL), 132 to 152 (INTT…AGIS), 197 to 217 (LVIA…LMLL), and 218 to 238 (GLFT…AYIG).

It belongs to the ATPase A chain family. As to quaternary structure, F-type ATPases have 2 components, CF(1) - the catalytic core - and CF(0) - the membrane proton channel. CF(1) has five subunits: alpha(3), beta(3), gamma(1), delta(1), epsilon(1). CF(0) has four main subunits: a, b, b' and c.

It localises to the plastid. Its subcellular location is the chloroplast thylakoid membrane. In terms of biological role, key component of the proton channel; it plays a direct role in the translocation of protons across the membrane. The polypeptide is ATP synthase subunit a, chloroplastic (Bigelowiella natans (Pedinomonas minutissima)).